We begin with the raw amino-acid sequence, 900 residues long: Protein translocase subunit SecA (900 aa).

Residues glutamine 87, 105 to 109 (GEGKT), and aspartate 510 each bind ATP. The interval 857–890 (DSLDSLSDGGSDSADGQEYPKVGRNEPCPCGSGK) is disordered. A compositionally biased stretch (low complexity) spans 860–872 (DSLSDGGSDSADG). Residues cysteine 884, cysteine 886, cysteine 895, and histidine 896 each coordinate Zn(2+).

This sequence belongs to the SecA family. Monomer and homodimer. Part of the essential Sec protein translocation apparatus which comprises SecA, SecYEG and auxiliary proteins SecDF-YajC and YidC. The cofactor is Zn(2+).

It localises to the cell inner membrane. The protein resides in the cytoplasm. The enzyme catalyses ATP + H2O + cellular proteinSide 1 = ADP + phosphate + cellular proteinSide 2.. Part of the Sec protein translocase complex. Interacts with the SecYEG preprotein conducting channel. Has a central role in coupling the hydrolysis of ATP to the transfer of proteins into and across the cell membrane, serving both as a receptor for the preprotein-SecB complex and as an ATP-driven molecular motor driving the stepwise translocation of polypeptide chains across the membrane. The sequence is that of Protein translocase subunit SecA from Marinomonas sp. (strain MWYL1).